The sequence spans 409 residues: Arginine deiminase (409 aa).

The active-site Amidino-cysteine intermediate is cysteine 399.

This sequence belongs to the arginine deiminase family.

Its subcellular location is the cytoplasm. It catalyses the reaction L-arginine + H2O = L-citrulline + NH4(+). Its pathway is amino-acid degradation; L-arginine degradation via ADI pathway; carbamoyl phosphate from L-arginine: step 1/2. The protein is Arginine deiminase of Borreliella afzelii (strain PKo) (Borrelia afzelii).